The sequence spans 395 residues: Probable peptidoglycan glycosyltransferase FtsW (395 aa).

Topologically, residues 1-24 are cytoplasmic; that stretch reads MADLAAGVAERGPRLSLWSSLDQR. Residues 25–45 form a helical membrane-spanning segment; that stretch reads LVWVVAATALLGLVMVASASI. The Periplasmic segment spans residues 46–62; the sequence is SMAEQATGDPFYFFKRQ. A helical transmembrane segment spans residues 63 to 83; it reads IFFALLGLGMALALLQIPLAT. The Cytoplasmic segment spans residues 84-86; it reads WER. The chain crosses the membrane as a helical span at residues 87 to 107; sequence AGPGLLLGALALLVLVLIPGV. The Periplasmic portion of the chain corresponds to 108 to 116; it reads GREVNGAVR. Residues 117–137 traverse the membrane as a helical segment; it reads WIPLGVFNLQVAEVVKVLLAL. The Cytoplasmic portion of the chain corresponds to 138–152; it reads YLAGFLVRRQQQLRT. The helical transmembrane segment at 153 to 173 threads the bilayer; the sequence is SMAAFLVPVLVSAACAFLLLL. At 174–178 the chain is on the periplasmic side; it reads QPDFG. A helical transmembrane segment spans residues 179 to 199; that stretch reads TALMLMALAVGLLYLAGAPLW. Arg200 is a topological domain (cytoplasmic). A helical membrane pass occupies residues 201–221; sequence FAALVGVLAAAAAALVVYSPY. At 222 to 276 the chain is on the periplasmic side; sequence RWQRVTAFMDPWSDPFNTGFQLTQSLIAIGRGDWLGVGLGGSVQKLFYLPEAHTD. The helical transmembrane segment at 277 to 297 threads the bilayer; the sequence is FVFSVLAEELGWLGVLAVVLL. Topologically, residues 298–316 are cytoplasmic; the sequence is FSYIVWRAMAVGWQCHRHR. Residues 317–337 form a helical membrane-spanning segment; the sequence is LPFAGYLAWAVGLALGLQAFI. Over 338–352 the chain is Periplasmic; the sequence is NMGVATGLLPTKGLT. Residues 353 to 373 form a helical membrane-spanning segment; the sequence is LPLFSYGGSSALATGAMVGLL. The Cytoplasmic segment spans residues 374–395; it reads LRCGYELAQARAEGRRPEEAAS.

It belongs to the SEDS family. FtsW subfamily.

The protein resides in the cell inner membrane. The catalysed reaction is [GlcNAc-(1-&gt;4)-Mur2Ac(oyl-L-Ala-gamma-D-Glu-L-Lys-D-Ala-D-Ala)](n)-di-trans,octa-cis-undecaprenyl diphosphate + beta-D-GlcNAc-(1-&gt;4)-Mur2Ac(oyl-L-Ala-gamma-D-Glu-L-Lys-D-Ala-D-Ala)-di-trans,octa-cis-undecaprenyl diphosphate = [GlcNAc-(1-&gt;4)-Mur2Ac(oyl-L-Ala-gamma-D-Glu-L-Lys-D-Ala-D-Ala)](n+1)-di-trans,octa-cis-undecaprenyl diphosphate + di-trans,octa-cis-undecaprenyl diphosphate + H(+). It participates in cell wall biogenesis; peptidoglycan biosynthesis. In terms of biological role, peptidoglycan polymerase that is essential for cell division. The polypeptide is Probable peptidoglycan glycosyltransferase FtsW (Halorhodospira halophila (strain DSM 244 / SL1) (Ectothiorhodospira halophila (strain DSM 244 / SL1))).